The sequence spans 848 residues: ATP-dependent Clp protease ATP-binding subunit ClpC1 (848 aa).

Residues 2-144 enclose the Clp R domain; sequence FERFTDRARK…RQQVIQLLSG (143 aa). Repeat regions lie at residues 5-70 and 80-144; these read FTDR…IGQG and FTPR…LLSG. The interval 171-418 is i; the sequence is LDQFGRNLTA…RMRIRRMTAP (248 aa). 216–223 serves as a coordination point for ATP; the sequence is GEPGVGKT. Residues 425-460 enclose the UVR domain; that stretch reads DEKIAEARREKESAIDAQDFEKAASLRDREKTLVAQ. An II region spans residues 479–670; that stretch reads VDDEQIAEVL…VLIFTSNLGT (192 aa). ATP is bound at residue 553-560; that stretch reads GPSGVGKT. The interval 821 to 848 is disordered; the sequence is TGTRKPPAEPDLAKAGAHSAGGPEPAAR.

The protein belongs to the ClpA/ClpB family. ClpC subfamily.

Functionally, ATP-dependent specificity component of the Clp protease. It directs the protease to specific substrates. Can perform chaperone functions in the absence of ClpP. The chain is ATP-dependent Clp protease ATP-binding subunit ClpC1 (clpC1) from Mycobacterium tuberculosis (strain CDC 1551 / Oshkosh).